Reading from the N-terminus, the 532-residue chain is MAKFVFVTGGVVSGLGKGITASSLGNLLKASGLKVFMQKFDPYLNVDPGTMSPYQHGEVFVTDDGGETDLDLGHYERFIDEKLTKMSSTSAGKIYLETINAERRGDWGGQTIQVVPHITDSIKNKVYQAAKTSGADVIISEIGGTVGDIESQPFIEAIRQIRMEQGKENVVFIHVALLLYLNASKEYKTKPIQMSVKELLSLGIQPDIIVQRTDKHSSKEIKEKISLFCNIPTSNVIDAIDKESIYEVPLEMYEQNLHGLVLDQLQIRTKKTDMESWIKFCEKIKASKEEFEVTFVGKYIELQDAYLSVIESLKIAGYEFKRKLKINWIQADKLNESNYKEVLQNAKGILVPGGFGDRGIEGMILASKFARENSIPYLGICLGMQIATISIARDWLNLPEANSTEFDHSGAVPIFDFIRGIDVQNLGGTLRLGAFYKTTIKEGTKAEKLYGSREVFERHRHRYEFNNEYKKALEEKGLVFSGIYEEKKLVEIIELPNHPFFVGSQYHPEFTSRPNKPNPLFKGFVEAIVNNK.

An amidoligase domain region spans residues 1–267; it reads MAKFVFVTGG…HGLVLDQLQI (267 aa). Position 13 (Ser-13) interacts with CTP. UTP is bound at residue Ser-13. Position 14-19 (14-19) interacts with ATP; that stretch reads GLGKGI. Tyr-54 contributes to the L-glutamine binding site. Asp-71 is a binding site for ATP. The Mg(2+) site is built by Asp-71 and Glu-141. Residues 148 to 150, 188 to 193, and Lys-224 contribute to the CTP site; these read DIE and KTKPIQ. Residues 188–193 and Lys-224 each bind UTP; that span reads KTKPIQ. A Glutamine amidotransferase type-1 domain is found at 292–532; that stretch reads EVTFVGKYIE…GFVEAIVNNK (241 aa). Gly-354 is an L-glutamine binding site. Cys-381 serves as the catalytic Nucleophile; for glutamine hydrolysis. L-glutamine-binding positions include 382-385, Glu-405, and Arg-462; that span reads LGMQ. Catalysis depends on residues His-507 and Glu-509.

The protein belongs to the CTP synthase family. In terms of assembly, homotetramer.

The enzyme catalyses UTP + L-glutamine + ATP + H2O = CTP + L-glutamate + ADP + phosphate + 2 H(+). The catalysed reaction is L-glutamine + H2O = L-glutamate + NH4(+). It carries out the reaction UTP + NH4(+) + ATP = CTP + ADP + phosphate + 2 H(+). The protein operates within pyrimidine metabolism; CTP biosynthesis via de novo pathway; CTP from UDP: step 2/2. Allosterically activated by GTP, when glutamine is the substrate; GTP has no effect on the reaction when ammonia is the substrate. The allosteric effector GTP functions by stabilizing the protein conformation that binds the tetrahedral intermediate(s) formed during glutamine hydrolysis. Inhibited by the product CTP, via allosteric rather than competitive inhibition. Its function is as follows. Catalyzes the ATP-dependent amination of UTP to CTP with either L-glutamine or ammonia as the source of nitrogen. Regulates intracellular CTP levels through interactions with the four ribonucleotide triphosphates. This chain is CTP synthase, found in Mesoplasma florum (strain ATCC 33453 / NBRC 100688 / NCTC 11704 / L1) (Acholeplasma florum).